A 30-amino-acid chain; its full sequence is Cyclotide cter-Q (30 aa).

The cyclopeptide (Gly-Asn) cross-link spans 1 to 30; it reads GIPCGESCVFIPCISTVIGCSCKNKVCYRN. 3 disulfides stabilise this stretch: Cys-4–Cys-20, Cys-8–Cys-22, and Cys-13–Cys-27.

This is a cyclic peptide.

It localises to the secreted. In terms of biological role, probably participates in a plant defense mechanism. The polypeptide is Cyclotide cter-Q (Clitoria ternatea (Butterfly pea)).